Consider the following 345-residue polypeptide: Beta-2-glycoprotein 1 (345 aa).

Residues 1–19 (MISLGLILFSSVLCHVATA) form the signal peptide. Sushi domains follow at residues 21-81 (RTCP…RCIP), 82-139 (RVCP…VCTR), 140-202 (VTCP…ECRE), and 203-262 (VKCP…SCKA). Intrachain disulfides connect cysteine 23/cysteine 66, cysteine 51/cysteine 79, cysteine 84/cysteine 124, cysteine 110/cysteine 137, cysteine 142/cysteine 188, cysteine 174/cysteine 200, cysteine 205/cysteine 248, cysteine 234/cysteine 260, cysteine 264/cysteine 315, cysteine 300/cysteine 325, and cysteine 307/cysteine 345. The O-linked (GalNAc...) threonine glycan is linked to threonine 33. Asparagine 117, asparagine 162, asparagine 183, and asparagine 193 each carry an N-linked (GlcNAc...) asparagine glycan. The N-linked (GlcNAc...) asparagine glycan is linked to asparagine 253. The sushi-like stretch occupies residues 263-345 (SCKLSVKKAT…KTDASDVKPC (83 aa)).

As to expression, expressed by the liver and secreted in plasma.

It is found in the secreted. Its function is as follows. Binds to various kinds of negatively charged substances such as heparin, phospholipids, and dextran sulfate. May prevent activation of the intrinsic blood coagulation cascade by binding to phospholipids on the surface of damaged cells. The chain is Beta-2-glycoprotein 1 (APOH) from Canis lupus familiaris (Dog).